Here is a 680-residue protein sequence, read N- to C-terminus: MALDKLDLYVIITLVVAIAAYFAKNQFLDQQQDTGFLNTDSGDGNSRDILQALKKNNKNTLLLFGSQTGTAEDYANKLSRELHSRFGLKTMVADFADYDFENFGDITEDILVFFIVATYGEGEPTDNADEFHTWLTEEADTLSTLKYTVFGLGNSTYEFFNAIGRKFDRLLGEKGGDRFAEYGEGDDGTGTLDEDFLAWKDNVFDSLKNDLNFEEKELKYEPNVKLTERDDLSGNDPDVSLGEPNVKYIKSEGVDLTKGPFDHTHPFLARIVKTKELFTSEDRHCVHVEFDISESNLKYTTGDHLAIWPSNSDENIKQFAKCFGLEDKLDTVIELKALDSTYSIPFPNPITYGAVIRHHLEISGPVSRQFFLSIAGFAPDEETKKSFTRIGGDKQEFASKVTRRKFNIADALLFASNNRPWSDVPFEFLIENVQHLTPRYYSISSSSLSEKQTINVTAVVEAEEEADGRPVTGVVTNLLKNIEIEQNKTGETPMVHYDLNGPRGKFSKFRLPVHVRRSNFKLPKNSTTPVILIGPGTGVAPLRGFVRERVQQVKNGVNVGKTVLFYGCRNSEQDFLYKQEWSEYASVLGENFEMFNAFSRQDPTKKVYVQDKILENSALVDELLSSGAIIYVCGDASRMARDVQAAIAKIVAKSRDIHEDKAAELVKSWKVQNRYQEDVW.

Residues 1 to 5 (MALDK) are Lumenal-facing. A helical membrane pass occupies residues 6–23 (LDLYVIITLVVAIAAYFA). At 24–680 (KNQFLDQQQD…VQNRYQEDVW (657 aa)) the chain is on the cytoplasmic side. The region spanning 60–204 (TLLLFGSQTG…DFLAWKDNVF (145 aa)) is the Flavodoxin-like domain. FMN contacts are provided by residues 66–71 (SQTGTA), 117–120 (ATYG), 152–161 (LGNSTYEFFN), and Asp187. The FAD-binding FR-type domain maps to 264–509 (THPFLARIVK…NGPRGKFSKF (246 aa)). Arg283 is a binding site for NADP(+). Residues 439-442 (RYYS), 457-459 (TAV), and 473-476 (GVVT) each bind FAD. NADP(+) contacts are provided by residues Thr537, 599–600 (SR), 606–610 (KVYVQ), and Asp642. Trp680 contributes to the FAD binding site.

This sequence belongs to the NADPH--cytochrome P450 reductase family. In the N-terminal section; belongs to the flavodoxin family. It in the C-terminal section; belongs to the flavoprotein pyridine nucleotide cytochrome reductase family. The cofactor is FAD. It depends on FMN as a cofactor.

The protein resides in the endoplasmic reticulum membrane. It localises to the mitochondrion outer membrane. It is found in the cell membrane. It catalyses the reaction 2 oxidized [cytochrome P450] + NADPH = 2 reduced [cytochrome P450] + NADP(+) + H(+). In terms of biological role, this enzyme is required for electron transfer from NADP to cytochrome P450 in microsomes. It can also provide electron transfer to heme oxygenase and cytochrome B5. Involved in ergosterol biosynthesis. This is NADPH--cytochrome P450 reductase from Candida tropicalis (Yeast).